We begin with the raw amino-acid sequence, 97 residues long: Kininogen-1 (97 aa).

Positions 1 to 23 are cleaved as a signal peptide; it reads MRLWFCLSFLIILCVEHFPGTLA.

Belongs to the bradykinin-related peptide family. Expressed by the skin glands.

Its subcellular location is the secreted. [Ala3,Thr6]bradykinin: produces in vitro relaxation of rat arterial smooth muscle and constriction of intestinal smooth muscle. Possesses insulin-releasing activity. May target bradykinin receptors (BDKRB). The protein is Kininogen-1 of Bombina variegata (Yellow-bellied toad).